Consider the following 475-residue polypeptide: ATP synthase subunit beta (475 aa).

160-167 is an ATP binding site; sequence GGAGVGKT.

This sequence belongs to the ATPase alpha/beta chains family. F-type ATPases have 2 components, CF(1) - the catalytic core - and CF(0) - the membrane proton channel. CF(1) has five subunits: alpha(3), beta(3), gamma(1), delta(1), epsilon(1). CF(0) has three main subunits: a(1), b(2) and c(9-12). The alpha and beta chains form an alternating ring which encloses part of the gamma chain. CF(1) is attached to CF(0) by a central stalk formed by the gamma and epsilon chains, while a peripheral stalk is formed by the delta and b chains.

Its subcellular location is the cell membrane. The enzyme catalyses ATP + H2O + 4 H(+)(in) = ADP + phosphate + 5 H(+)(out). Produces ATP from ADP in the presence of a proton gradient across the membrane. The catalytic sites are hosted primarily by the beta subunits. In Mycolicibacterium vanbaalenii (strain DSM 7251 / JCM 13017 / BCRC 16820 / KCTC 9966 / NRRL B-24157 / PYR-1) (Mycobacterium vanbaalenii), this protein is ATP synthase subunit beta.